A 181-amino-acid polypeptide reads, in one-letter code: Probable nicotinate-nucleotide adenylyltransferase (181 aa).

This sequence belongs to the NadD family.

It carries out the reaction nicotinate beta-D-ribonucleotide + ATP + H(+) = deamido-NAD(+) + diphosphate. It functions in the pathway cofactor biosynthesis; NAD(+) biosynthesis; deamido-NAD(+) from nicotinate D-ribonucleotide: step 1/1. Functionally, catalyzes the reversible adenylation of nicotinate mononucleotide (NaMN) to nicotinic acid adenine dinucleotide (NaAD). The protein is Probable nicotinate-nucleotide adenylyltransferase of Campylobacter jejuni subsp. jejuni serotype O:6 (strain 81116 / NCTC 11828).